The primary structure comprises 246 residues: Pyridoxine 5'-phosphate synthase (246 aa).

Residues asparagine 8 and arginine 19 each coordinate 3-amino-2-oxopropyl phosphate. Histidine 44 (proton acceptor) is an active-site residue. Arginine 46 and histidine 51 together coordinate 1-deoxy-D-xylulose 5-phosphate. Catalysis depends on glutamate 76, which acts as the Proton acceptor. Residue threonine 106 coordinates 1-deoxy-D-xylulose 5-phosphate. Residue histidine 198 is the Proton donor of the active site. 3-amino-2-oxopropyl phosphate-binding positions include aspartate 199 and glycine 221–histidine 222.

The protein belongs to the PNP synthase family. Homooctamer; tetramer of dimers.

It is found in the cytoplasm. It carries out the reaction 3-amino-2-oxopropyl phosphate + 1-deoxy-D-xylulose 5-phosphate = pyridoxine 5'-phosphate + phosphate + 2 H2O + H(+). The protein operates within cofactor biosynthesis; pyridoxine 5'-phosphate biosynthesis; pyridoxine 5'-phosphate from D-erythrose 4-phosphate: step 5/5. Catalyzes the complicated ring closure reaction between the two acyclic compounds 1-deoxy-D-xylulose-5-phosphate (DXP) and 3-amino-2-oxopropyl phosphate (1-amino-acetone-3-phosphate or AAP) to form pyridoxine 5'-phosphate (PNP) and inorganic phosphate. This chain is Pyridoxine 5'-phosphate synthase, found in Brucella abortus (strain S19).